The sequence spans 295 residues: bZIP transcription factor 60 (295 aa).

Residues 101–154 (PAAADDSGKENSDLVVEKKSNDSGSEIHDDDDEEGDDDAVAKKRRRRVRNRDAA) are disordered. Over residues 106–127 (DSGKENSDLVVEKKSNDSGSEI) the composition is skewed to basic and acidic residues. Acidic residues predominate over residues 128–138 (HDDDDEEGDDD). The region spanning 140 to 203 (VAKKRRRRVR…QSLRYCLQKG (64 aa)) is the bZIP domain. The interval 142–162 (KKRRRRVRNRDAAVRSRERKK) is basic motif. Residues 168-182 (LEKKSKYLERECLRL) form a leucine-zipper region. Residues 224–244 (LLLGSLLWLLGVNFICLFPYM) form a helical membrane-spanning segment.

This sequence belongs to the bZIP family. As to quaternary structure, interacts with BZIP28. Expressed in seedlings, rosette and cauline leaves, stems, buds, flowers, siliques, immature seeds, anthers and pollen grains.

Its subcellular location is the endoplasmic reticulum membrane. It is found in the nucleus. In terms of biological role, transcription factor involved in the unfolded protein response (UPR). Acts during endoplasmic reticulum stress (ER) by activating unfolded protein response (UPR) target genes via direct binding to the UPR element (UPRE). Plays a role in plant immunity and abiotic stress responses. This chain is bZIP transcription factor 60, found in Arabidopsis thaliana (Mouse-ear cress).